The following is a 220-amino-acid chain: Orotate phosphoribosyltransferase (220 aa).

K26 serves as a coordination point for 5-phospho-alpha-D-ribose 1-diphosphate. An orotate-binding site is contributed by 34-35 (FF). Residues 72-73 (YK), R99, K100, K103, H105, and 125-133 (DDVISAGTS) each bind 5-phospho-alpha-D-ribose 1-diphosphate. Orotate-binding residues include S129 and R157.

The protein belongs to the purine/pyrimidine phosphoribosyltransferase family. PyrE subfamily. In terms of assembly, homodimer. It depends on Mg(2+) as a cofactor.

The catalysed reaction is orotidine 5'-phosphate + diphosphate = orotate + 5-phospho-alpha-D-ribose 1-diphosphate. Its pathway is pyrimidine metabolism; UMP biosynthesis via de novo pathway; UMP from orotate: step 1/2. Catalyzes the transfer of a ribosyl phosphate group from 5-phosphoribose 1-diphosphate to orotate, leading to the formation of orotidine monophosphate (OMP). The polypeptide is Orotate phosphoribosyltransferase (Nitrosococcus oceani (strain ATCC 19707 / BCRC 17464 / JCM 30415 / NCIMB 11848 / C-107)).